A 593-amino-acid polypeptide reads, in one-letter code: DNA mismatch repair protein MutL (593 aa).

It belongs to the DNA mismatch repair MutL/HexB family.

Functionally, this protein is involved in the repair of mismatches in DNA. It is required for dam-dependent methyl-directed DNA mismatch repair. May act as a 'molecular matchmaker', a protein that promotes the formation of a stable complex between two or more DNA-binding proteins in an ATP-dependent manner without itself being part of a final effector complex. The sequence is that of DNA mismatch repair protein MutL from Leptospira interrogans serogroup Icterohaemorrhagiae serovar copenhageni (strain Fiocruz L1-130).